Reading from the N-terminus, the 373-residue chain is SWI/SNF-related matrix-associated actin-dependent regulator of chromatin subfamily B member 1 (373 aa).

Positions 1-101 (MALSKAFGQK…DEKYKAVSIS (101 aa)) are DNA-binding.

It belongs to the SNF5 family. In terms of assembly, component of the multiprotein chromatin-remodeling complexes SWI/SNF. Component of neural progenitors-specific chromatin remodeling complex (npBAF complex) and the neuron-specific chromatin remodeling complex (nBAF complex). Component of the BAF (SWI/SNF) chromatin remodeling complex. Component of the SWI/SNF-B (PBAF) chromatin remodeling complex. Binds to double-stranded DNA.

It localises to the nucleus. In terms of biological role, involved in chromatin-remodeling. Core component of the BAF (SWI/SNF) complex. This ATP-dependent chromatin-remodeling complex plays important roles in cell proliferation and differentiation, in cellular antiviral activities and inhibition of tumor formation. Belongs to the neural progenitors-specific chromatin remodeling complex (npBAF complex) and the neuron-specific chromatin remodeling complex (nBAF complex) and may play a role in neural development. The polypeptide is SWI/SNF-related matrix-associated actin-dependent regulator of chromatin subfamily B member 1 (smarcb1) (Dichotomyctere fluviatilis (Green pufferfish)).